Consider the following 383-residue polypeptide: Processive diacylglycerol beta-glucosyltransferase (383 aa).

Belongs to the glycosyltransferase 28 family. UgtP subfamily.

The protein localises to the cell membrane. It catalyses the reaction a 1,2-diacyl-3-O-(beta-D-glucopyranosyl)-sn-glycerol + UDP-alpha-D-glucose = a 1,2-diacyl-3-O-(beta-D-Glc-(1-&gt;6)-beta-D-Glc)-sn-glycerol + UDP + H(+). The catalysed reaction is a 1,2-diacyl-3-O-(beta-D-Glc-(1-&gt;6)-beta-D-Glc)-sn-glycerol + UDP-alpha-D-glucose = a 1,2-diacyl-3-O-(beta-D-Glc-(1-&gt;6)-beta-D-Glc-(1-&gt;6)-beta-D-Glc)-sn-glycerol + UDP + H(+). The enzyme catalyses a 1,2-diacyl-sn-glycerol + UDP-alpha-D-glucose = a 1,2-diacyl-3-O-(beta-D-glucopyranosyl)-sn-glycerol + UDP + H(+). It participates in glycolipid metabolism; diglucosyl-diacylglycerol biosynthesis. Functionally, processive glucosyltransferase involved in the biosynthesis of both the bilayer- and non-bilayer-forming membrane glucolipids. Is able to successively transfer up to three glucosyl residues to diacylglycerol (DAG), thereby catalyzing the formation of beta-monoglucosyl-DAG (3-O-(beta-D-glucopyranosyl)-1,2-diacyl-sn-glycerol), beta-diglucosyl-DAG (3-O-(beta-D-glucopyranosyl-beta-(1-&gt;6)-D-glucopyranosyl)-1,2-diacyl-sn-glycerol) and beta-triglucosyl-DAG (3-O-(beta-D-glucopyranosyl-beta-(1-&gt;6)-D-glucopyranosyl-beta-(1-&gt;6)-D-glucopyranosyl)-1,2-diacyl-sn-glycerol). Beta-diglucosyl-DAG is the predominant glycolipid found in Bacillales and is also used as a membrane anchor for lipoteichoic acid (LTA). This chain is Processive diacylglycerol beta-glucosyltransferase, found in Bacillus licheniformis (strain ATCC 14580 / DSM 13 / JCM 2505 / CCUG 7422 / NBRC 12200 / NCIMB 9375 / NCTC 10341 / NRRL NRS-1264 / Gibson 46).